The chain runs to 303 residues: Cytidine deaminase (303 aa).

CMP/dCMP-type deaminase domains are found at residues 57 to 172 and 196 to 303; these read TDKE…YLPD and ITED…IQVS. 98-100 contacts substrate; that stretch reads NQE. Residue His111 participates in Zn(2+) binding. The Proton donor role is filled by Glu113. Zn(2+)-binding residues include Cys138 and Cys141.

It belongs to the cytidine and deoxycytidylate deaminase family. As to quaternary structure, homodimer. The cofactor is Zn(2+).

It carries out the reaction cytidine + H2O + H(+) = uridine + NH4(+). The catalysed reaction is 2'-deoxycytidine + H2O + H(+) = 2'-deoxyuridine + NH4(+). Its function is as follows. This enzyme scavenges exogenous and endogenous cytidine and 2'-deoxycytidine for UMP synthesis. In Histophilus somni (strain 2336) (Haemophilus somnus), this protein is Cytidine deaminase.